We begin with the raw amino-acid sequence, 446 residues long: Chromosomal replication initiator protein DnaA (446 aa).

Residues 1 to 81 (MENISDLWNS…AKLAIRFIIP (81 aa)) form a domain I, interacts with DnaA modulators region. The tract at residues 81 to 109 (PQSQAEEDIDLPPVKRNPAQDDSAHLPQS) is domain II. Residues 110 to 326 (MLNPKYTFDT…GALIRVVAYS (217 aa)) are domain III, AAA+ region. ATP is bound by residues Gly154, Gly156, Lys157, and Thr158. Residues 327–446 (SLINKDINAD…QVEEINGILK (120 aa)) form a domain IV, binds dsDNA region.

It belongs to the DnaA family. As to quaternary structure, oligomerizes as a right-handed, spiral filament on DNA at oriC.

It is found in the cytoplasm. Plays an essential role in the initiation and regulation of chromosomal replication. ATP-DnaA binds to the origin of replication (oriC) to initiate formation of the DNA replication initiation complex once per cell cycle. Binds the DnaA box (a 9 base pair repeat at the origin) and separates the double-stranded (ds)DNA. Forms a right-handed helical filament on oriC DNA; dsDNA binds to the exterior of the filament while single-stranded (ss)DNA is stabiized in the filament's interior. The ATP-DnaA-oriC complex binds and stabilizes one strand of the AT-rich DNA unwinding element (DUE), permitting loading of DNA polymerase. After initiation quickly degrades to an ADP-DnaA complex that is not apt for DNA replication. Binds acidic phospholipids. The sequence is that of Chromosomal replication initiator protein DnaA from Bacillus cereus (strain G9842).